Here is a 196-residue protein sequence, read N- to C-terminus: RNA-binding protein with multiple splicing (196 aa).

An N-acetylmethionine modification is found at M1. A Phosphothreonine modification is found at T12. An RRM domain is found at 24–101 (RTLFVSGLPL…QTLRLEFAKA (78 aa)). The interval 98–105 (FAKANTKM) is interaction with RNA. Position 113 is a phosphothreonine (T113).

As to quaternary structure, homodimer; each protein chain binds one RNA molecule via the external surface of the homodimer. Interacts with RNA binding proteins MBNL1, RBFOX2, RBM4 and RBM14; the interaction allows cooperative assembly of stable cell-specific alternative splicing regulatory complexes. Interacts with SMAD2, SMAD3 and SMAD4; the interactions are direct. In terms of tissue distribution, ubiquitously expressed, at various levels depending on the isoform and the tissue. Strongly expressed in the heart, prostate, small intestine, large intestine, and ovary; moderately expressed in the placenta, lung, liver, kidney, pancreas, and testis; and poorly expressed in the skeletal muscle, spleen, thymus and peripheral leukocytes.

The protein localises to the nucleus. The protein resides in the cytoplasm. It localises to the stress granule. Its subcellular location is the P-body. RNA binding protein that mediates the regulation of pre-mRNA alternative splicing (AS). Acts either as activator (FLNB, HSPG2, LIPA1, MYOCD, PTPRF and PPFIBP1) or repressor (TPM1, ACTN1, ITGA7, PIEZO1, LSM14B, MBNL1 and MBML2) of splicing events on specific pre-mRNA targets. Together with RNA binding proteins RBFOX2 and MBNL1/2, activates a splicing program associated with differentiated contractile vascular smooth muscle cells (SMC) by regulating AS of numerous pre-mRNA involved in actin cytoskeleton and focal adhesion machineries, suggesting a role in promoting a cell differentiated state. Binds to introns, exons and 3'-UTR associated with tandem CAC trinucleotide motifs separated by a variable spacer region, at a minimum as a dimer. The minimal length of RNA required for RBPMS-binding tandem CAC motifs is 15 nt, with spacing ranging from 1 to 9 nt. Can also bind to CA dinucleotide repeats. Mediates repression of TPM1 exon 3 by binding to CAC tandem repeats in the flanking intronic regions, followed by higher-order oligomerization and heterotypic interactions with other splicing regulators including MBNL1 and RBFOX2, which prevents assembly of ATP-dependent splicing complexes. Functionally, acts as a regulator of pre-mRNA alternative splicing (AS). Binds mRNA. Regulates AS of ACTN1, FLNB, although with lower efficiency than isoform A / RBPMSA. Acts as coactivator of SMAD transcriptional activity in a TGFB1-dependent manner, possibly through increased phosphorylation of SMAD2 and SMAD3 at the C-terminal SSXS regions and promotion of the nuclear accumulation of SMAD proteins. In Homo sapiens (Human), this protein is RNA-binding protein with multiple splicing.